The primary structure comprises 113 residues: Large ribosomal subunit protein uL22 (113 aa).

The protein belongs to the universal ribosomal protein uL22 family. In terms of assembly, part of the 50S ribosomal subunit.

Functionally, this protein binds specifically to 23S rRNA; its binding is stimulated by other ribosomal proteins, e.g. L4, L17, and L20. It is important during the early stages of 50S assembly. It makes multiple contacts with different domains of the 23S rRNA in the assembled 50S subunit and ribosome. In terms of biological role, the globular domain of the protein is located near the polypeptide exit tunnel on the outside of the subunit, while an extended beta-hairpin is found that lines the wall of the exit tunnel in the center of the 70S ribosome. This chain is Large ribosomal subunit protein uL22, found in Carboxydothermus hydrogenoformans (strain ATCC BAA-161 / DSM 6008 / Z-2901).